The sequence spans 405 residues: Acetate kinase (405 aa).

N7 lines the Mg(2+) pocket. K14 is an ATP binding site. R92 lines the substrate pocket. The active-site Proton donor/acceptor is the D149. ATP-binding positions include 209 to 213 and 284 to 286; these read HLGNG and DMR. E389 is a Mg(2+) binding site.

It belongs to the acetokinase family. Homodimer. The cofactor is Mg(2+). Mn(2+) serves as cofactor.

It is found in the cytoplasm. It catalyses the reaction acetate + ATP = acetyl phosphate + ADP. The protein operates within metabolic intermediate biosynthesis; acetyl-CoA biosynthesis; acetyl-CoA from acetate: step 1/2. Functionally, catalyzes the formation of acetyl phosphate from acetate and ATP. Can also catalyze the reverse reaction. This is Acetate kinase from Borrelia garinii subsp. bavariensis (strain ATCC BAA-2496 / DSM 23469 / PBi) (Borreliella bavariensis).